The primary structure comprises 226 residues: Octanoyltransferase (226 aa).

A BPL/LPL catalytic domain is found at 37-220 (GTAGELIWLL…SFSKVFGPVE (184 aa)). Substrate-binding positions include 76–83 (RGGQFTYH), 151–153 (AIG), and 164–166 (GIS). The active-site Acyl-thioester intermediate is Cys-182.

The protein belongs to the LipB family.

The protein resides in the cytoplasm. It catalyses the reaction octanoyl-[ACP] + L-lysyl-[protein] = N(6)-octanoyl-L-lysyl-[protein] + holo-[ACP] + H(+). It participates in protein modification; protein lipoylation via endogenous pathway; protein N(6)-(lipoyl)lysine from octanoyl-[acyl-carrier-protein]: step 1/2. In terms of biological role, catalyzes the transfer of endogenously produced octanoic acid from octanoyl-acyl-carrier-protein onto the lipoyl domains of lipoate-dependent enzymes. Lipoyl-ACP can also act as a substrate although octanoyl-ACP is likely to be the physiological substrate. The sequence is that of Octanoyltransferase from Caulobacter vibrioides (strain ATCC 19089 / CIP 103742 / CB 15) (Caulobacter crescentus).